The following is a 271-amino-acid chain: Structure-specific endonuclease subunit slx1 (271 aa).

A GIY-YIG domain is found at 5-87 (NFYCCYLLKS…QNLGISRYTK (83 aa)). The SLX1-type zinc finger occupies 180-231 (CNLCYECIESDELRANCPFTDCNSINHLTCLASSFLTEECQVLPIEGMCTKC).

The protein belongs to the SLX1 family. As to quaternary structure, forms a heterodimer with slx4. The cofactor is Mg(2+). Mn(2+) serves as cofactor.

It is found in the nucleus. The protein resides in the nucleolus. Functionally, catalytic subunit of the slx1-slx4 structure-specific endonuclease that resolves DNA secondary structures generated during DNA repair and recombination. Has endonuclease activity towards branched DNA substrates, introducing single-strand cuts in duplex DNA close to junctions with ss-DNA. Has a preference for stem-loop (SL) and splayed arm Y structures. Introduces a single-strand cut in duplex DNA on the 3' side of a double-strand/single-strand junction with respect to the single-strand moving 3' to 5' away from the junction. Plays a critical role in maintaining the integrity of the ribosomal DNA (rDNA) loci, where it has a role in re-starting stalled replication forks. The complex initiates homologous recombination (HR) events, used to maintain rDNA copy number, in the rDNA repeats that are processed by a mechanism that requires rad22, but not rhp51. It is also required for suppression of methyl methanesulfonate (MMS) and UV-C irradiation hypersensitivity of the structural maintenance of chromosome (SMC) protein mutant, smc6-74, by overexpression of brc1. Has Holliday junction resolvase activity in vitro. The polypeptide is Structure-specific endonuclease subunit slx1 (Schizosaccharomyces pombe (strain 972 / ATCC 24843) (Fission yeast)).